Here is a 125-residue protein sequence, read N- to C-terminus: C-X-C motif chemokine 9 (125 aa).

Positions 1 to 21 are cleaved as a signal peptide; that stretch reads MKKSAPLFLGIIFLTLTGVQG. Intrachain disulfides connect Cys-30–Cys-57 and Cys-32–Cys-73. Residues 91 to 125 form a disordered region; that stretch reads QVNQKKKQRKGKKYKKTKKVPKVKRSQRPSQKKTT. Residues 93–125 are compositionally biased toward basic residues; the sequence is NQKKKQRKGKKYKKTKKVPKVKRSQRPSQKKTT.

The protein belongs to the intercrine alpha (chemokine CxC) family.

The protein localises to the secreted. Its function is as follows. Cytokine that affects the growth, movement, or activation state of cells that participate in immune and inflammatory response. Chemotactic for activated T-cells. Binds to CXCR3. The chain is C-X-C motif chemokine 9 (CXCL9) from Bos taurus (Bovine).